The primary structure comprises 254 residues: GTP cyclohydrolase 1 type 2 homolog (254 aa).

Positions 68, 69, 106, 222, and 226 each coordinate a divalent metal cation.

It belongs to the GTP cyclohydrolase I type 2/NIF3 family. Homohexamer.

The polypeptide is GTP cyclohydrolase 1 type 2 homolog (Allochromatium vinosum (strain ATCC 17899 / DSM 180 / NBRC 103801 / NCIMB 10441 / D) (Chromatium vinosum)).